Here is a 264-residue protein sequence, read N- to C-terminus: Thiamine pyrophosphokinase 1 (264 aa).

Polar residues predominate over residues 1 to 12 (MPLPTMTHSSSF). Positions 1–27 (MPLPTMTHSSSFLRLPATSSPHPPPAD) are disordered.

Belongs to the thiamine pyrophosphokinase family.

Its subcellular location is the cytoplasm. It localises to the cytosol. The catalysed reaction is thiamine + ATP = thiamine diphosphate + AMP + H(+). It functions in the pathway cofactor biosynthesis; thiamine diphosphate biosynthesis; thiamine diphosphate from thiamine: step 1/1. Functionally, catalyzes the phosphorylation of thiamine to thiamine pyrophosphate (TPP). TPP is an active cofactor for enzymes involved in glycolysis and energy production. Plant leaves require high levels of TPP for photosynthesis and carbohydrate metabolism. This chain is Thiamine pyrophosphokinase 1 (TPK1), found in Oryza sativa subsp. japonica (Rice).